The primary structure comprises 292 residues: Ribosomal protein L11 methyltransferase (292 aa).

S-adenosyl-L-methionine contacts are provided by threonine 144, glycine 165, aspartate 187, and asparagine 229.

Belongs to the methyltransferase superfamily. PrmA family.

It is found in the cytoplasm. It carries out the reaction L-lysyl-[protein] + 3 S-adenosyl-L-methionine = N(6),N(6),N(6)-trimethyl-L-lysyl-[protein] + 3 S-adenosyl-L-homocysteine + 3 H(+). Methylates ribosomal protein L11. The chain is Ribosomal protein L11 methyltransferase from Pseudomonas fluorescens (strain SBW25).